A 225-amino-acid chain; its full sequence is NAD(P)H-quinone oxidoreductase subunit K, chloroplastic (225 aa).

[4Fe-4S] cluster contacts are provided by Cys43, Cys44, Cys108, and Cys139.

This sequence belongs to the complex I 20 kDa subunit family. NDH is composed of at least 16 different subunits, 5 of which are encoded in the nucleus. Requires [4Fe-4S] cluster as cofactor.

It localises to the plastid. The protein localises to the chloroplast thylakoid membrane. The enzyme catalyses a plastoquinone + NADH + (n+1) H(+)(in) = a plastoquinol + NAD(+) + n H(+)(out). It catalyses the reaction a plastoquinone + NADPH + (n+1) H(+)(in) = a plastoquinol + NADP(+) + n H(+)(out). In terms of biological role, NDH shuttles electrons from NAD(P)H:plastoquinone, via FMN and iron-sulfur (Fe-S) centers, to quinones in the photosynthetic chain and possibly in a chloroplast respiratory chain. The immediate electron acceptor for the enzyme in this species is believed to be plastoquinone. Couples the redox reaction to proton translocation, and thus conserves the redox energy in a proton gradient. This Guizotia abyssinica (Niger) protein is NAD(P)H-quinone oxidoreductase subunit K, chloroplastic.